The following is a 431-amino-acid chain: Glutamate-1-semialdehyde 2,1-aminomutase (431 aa).

At Lys265 the chain carries N6-(pyridoxal phosphate)lysine.

The protein belongs to the class-III pyridoxal-phosphate-dependent aminotransferase family. HemL subfamily. In terms of assembly, homodimer. Requires pyridoxal 5'-phosphate as cofactor.

The protein localises to the cytoplasm. It catalyses the reaction (S)-4-amino-5-oxopentanoate = 5-aminolevulinate. Its pathway is porphyrin-containing compound metabolism; protoporphyrin-IX biosynthesis; 5-aminolevulinate from L-glutamyl-tRNA(Glu): step 2/2. The sequence is that of Glutamate-1-semialdehyde 2,1-aminomutase from Aliivibrio fischeri (strain MJ11) (Vibrio fischeri).